Reading from the N-terminus, the 312-residue chain is Dihydroorotate dehydrogenase B (NAD(+)), catalytic subunit (312 aa).

FMN is bound by residues serine 23 and 47–48 (KA). Substrate-binding positions include lysine 47 and 71 to 75 (NAIGL). FMN is bound by residues asparagine 102 and asparagine 130. Asparagine 130 lines the substrate pocket. The Nucleophile role is filled by cysteine 133. FMN is bound by residues lysine 168 and isoleucine 194. Position 195–196 (195–196 (NT)) interacts with substrate. FMN is bound by residues glycine 220, 246–247 (GG), and 268–269 (GT).

Belongs to the dihydroorotate dehydrogenase family. Type 1 subfamily. In terms of assembly, heterotetramer of 2 PyrK and 2 PyrD type B subunits. The cofactor is FMN.

The protein resides in the cytoplasm. The catalysed reaction is (S)-dihydroorotate + NAD(+) = orotate + NADH + H(+). Its pathway is pyrimidine metabolism; UMP biosynthesis via de novo pathway; orotate from (S)-dihydroorotate (NAD(+) route): step 1/1. Catalyzes the conversion of dihydroorotate to orotate with NAD(+) as electron acceptor. The chain is Dihydroorotate dehydrogenase B (NAD(+)), catalytic subunit (pyrDB) from Enterococcus faecalis (strain ATCC 700802 / V583).